The chain runs to 487 residues: MADPRRRFRNKKRDEACSGLLAPVTIARREDAARMMQPKILLKKDRDREQETWDRERDKDRKLERDREAEPSPSCYPDTPPALKTMIVNRTGEVRPADRCQMPLAGGALVQGSGQLSAVPSSSVCAALVSSVPTSRDKGSCSGGAGTAGTSAGAPNALQELQPPRMNRPTPLIVANGIFNANARKLFHKTNTDFTVIGVLGGQSSGKSTLLNLLAAERSLDYDYYQHLFSPEADECIFATRHKLKPNNGQKSILRPRTETLQFFITRERHILLDTPPLMPVGKDSDHQDLYSLGTMAQLLSVCHILILVIDGLALEQLRLINAALRLRPTLHCKGYVRDHMPQVVFVRARAHRIDFEIQQRERLDKKLAYLYGPTGLPIYRGRGDARCLNTFLLPEVSSNKATAFHSCLGELVRQFRERILGCTRISMCHTSTELSEAIWFEILAESARKAAPHFEKIYAEIKLRHLDTRCQWRSDNWRTFSSNAES.

Disordered regions lie at residues 30 to 83 and 136 to 164; these read EDAA…PPAL and RDKG…LQPP. The segment covering 42-70 has biased composition (basic and acidic residues); sequence LKKDRDREQETWDRERDKDRKLERDREAE.

The protein belongs to the SMG9 family.

Its function is as follows. Involved in nonsense-mediated decay (NMD) of mRNAs containing premature stop codons. Probable component of kinase complex containing nonC and recruited to stalled ribosomes. This is Protein SMG9 from Drosophila melanogaster (Fruit fly).